The chain runs to 181 residues: Isopentenyl-diphosphate Delta-isomerase (181 aa).

Mn(2+) is bound by residues H29 and H36. The region spanning 34–167 (PLHLAFSCYL…GWAISPWAAE (134 aa)) is the Nudix hydrolase domain. Residue C71 is part of the active site. Position 73 (H73) interacts with Mn(2+). E91 provides a ligand contact to Mg(2+). The Mn(2+) site is built by E118 and E120. E120 is an active-site residue.

It belongs to the IPP isomerase type 1 family. Requires Mg(2+) as cofactor. It depends on Mn(2+) as a cofactor.

The protein resides in the cytoplasm. It carries out the reaction isopentenyl diphosphate = dimethylallyl diphosphate. The protein operates within isoprenoid biosynthesis; dimethylallyl diphosphate biosynthesis; dimethylallyl diphosphate from isopentenyl diphosphate: step 1/1. Functionally, catalyzes the 1,3-allylic rearrangement of the homoallylic substrate isopentenyl (IPP) to its highly electrophilic allylic isomer, dimethylallyl diphosphate (DMAPP). This chain is Isopentenyl-diphosphate Delta-isomerase, found in Mycolicibacterium vanbaalenii (strain DSM 7251 / JCM 13017 / BCRC 16820 / KCTC 9966 / NRRL B-24157 / PYR-1) (Mycobacterium vanbaalenii).